A 1518-amino-acid chain; its full sequence is LNKLAIPNANVCGWMSVRDYKRQGCNLDLDDNIRVPFYVKDLPETLHEKIWQTVEAHKADAGFGRICSSSACKIAYTLQTDIHSIPRTVKILDALLEQERTKQAHFRSMTSQSCSSSNFSLSSITSAIRSKYAKDHTEENIGVLQMAKAQLLEFKNLNIDPSYPELVRNFGALECVHHQTKEGVSKALRLKGHWNKQLVTRDATLMLGVLGGGAWMIFSYLRDSFKEEVVHQGFNRRQRQKLKFRQARDNRMAREVYGDDSTMEDYFGSAYSKKGKSKGRTRGMGTKTRKFVNMYGYDPTDYNFVRFVDPLTGHTLDENPLMDINLVQEHFSQVRNDYLGDDKITMQHIMSNPGIVAYYIKDATQKALKVDLTPHNPLRVCDKTATIAGFPEREFELRQTGQPVLVEPNAIPQINEEGDEEVGHESKSLFRGLRDYNPIASSICHLTNASGTRQSEIYGLGFGGLIVTNQHLFKRNDGELTIRSHHGEFVVKDTKTLKLLPCKGRDIIIIRLPKDFPPFPRRLQFRTPTAEDRVCLIGSNFQTKSVSSTMSETSATYPVDNSHFWKHWISTKDGHCGLPIVSTRDGSILGLHSLANSTNTQNFYAAFPDNFETTYLANQDNDNWIKQWRYNPDEVCWGSLQLKRDVPQSPFTICKLLTDLDGEFVYNQAKTTHWLRDKLEGNLKAVGACPGQLVTKHVVKGKCTLFETYLLTHPEEREFFQPLMGAYQKSALNKDAYVKDLMKYSKSIVVGAVDCEQFERAVDVVISMLISKGFSECSYVTDPEEIFSALNMKAAVGALYSGKKRDYFKDTSELEKEEFVRASCKRLFMGKKGVWNGSLKAELRPKEKVEANKTRSFTAAPIDTLLGGKVCVDDFNNQFYSLNLHCPWSVGMTKFRGGWDKLLRALPDGWIYCDADGSQFDSSLSPYLINAVLNIRLAFMEEWDIGEQMLSNLYTEIVYTPIATPDGTIVKKFKGNNSGQPSTVVDNTLMVILAMTYSLLKLGYHPDTHECICRYFVNGDDLVLAVHPAYESIYDELQHHFSQLGLNYTFTTKTENKEDLWFMSHKGIMCEGMYIPKLEPERIVSILEWDRSSEPIHRLEAICASMVEAWGYKELLREIRKFYSWVLEQAPYNALSKDGKAPYIAETALKKLYTDTEASETEIERYLEAFYSNLTDEDESNVVVHQADEKEDDEEEVDAGRPLVTTTQQPIVTTTTQQTPITSTTLQATQAMFNPIFTPATTEPTTRTVPHTTTTTPPSFGVIGNEDTAPNASNAVVRTGRDRDVDAGSIGTFTVPRLKAMTSKLSLPKVKGKAIMNLNHLAFYSPAQVDLSNTRAPQSCFQTWYEGVRRDYDVTDDEMSIILNGLMVWCIENGTSPNINGMWVMMDGETQVEYPIKPLLDHAKPTFRQIMAHFSNVAEAYIEKRNYEKAYMPRYGIQRNLTDYSLARYAFDFYEMTSTTPVRAREAHIQMKAAALRNAQNRLFGLDGNVGTQEEDTERHTAGDVNRNMHNLLGMRGV.

The Nuclear localization signal signature appears at Lys-273–Arg-280. Tyr-295 is modified (O-(5'-phospho-RNA)-tyrosine). Residues Ser-426 to Arg-644 enclose the Peptidase C4 domain. Catalysis depends on for nuclear inclusion protein A activity residues His-471, Asp-506, and Cys-576. Positions Trp-910 to Tyr-1034 constitute a RdRp catalytic domain. The segment covering Pro-1239 to Pro-1258 has biased composition (low complexity). Residues Pro-1239–Ala-1272 are disordered.

It belongs to the potyviridae genome polyprotein family. As to quaternary structure, interacts with host eIF4E protein (via cap-binding region); this interaction mediates the translation of the VPg-viral RNA conjugates. Part of a complex that comprises VPg, RNA, host EIF4E and EIF4G; this interaction mediates the translation of the VPg-viral RNA conjugates. Post-translationally, VPg is uridylylated by the polymerase and is covalently attached to the 5'-end of the genomic RNA. This uridylylated form acts as a nucleotide-peptide primer for the polymerase. Genome polyprotein of potyviruses undergoes post-translational proteolytic processing by the main proteinase NIa-pro resulting in the production of at least ten individual proteins. The P1 proteinase and the HC-pro cleave only their respective C-termini autocatalytically. 6K1 is essential for proper proteolytic separation of P3 from CI.

It is found in the host nucleus. The protein resides in the virion. It carries out the reaction Hydrolyzes glutaminyl bonds, and activity is further restricted by preferences for the amino acids in P6 - P1' that vary with the species of potyvirus, e.g. Glu-Xaa-Xaa-Tyr-Xaa-Gln-|-(Ser or Gly) for the enzyme from tobacco etch virus. The natural substrate is the viral polyprotein, but other proteins and oligopeptides containing the appropriate consensus sequence are also cleaved.. The enzyme catalyses RNA(n) + a ribonucleoside 5'-triphosphate = RNA(n+1) + diphosphate. Its function is as follows. Indispensable for virus replication. Mediates the cap-independent, EIF4E-dependent translation of viral genomic RNAs. Binds to the cap-binding site of host EIF4E and thus interferes with the host EIF4E-dependent mRNA export and translation. VPg-RNA directly binds EIF4E and is a template for transcription. Also forms trimeric complexes with EIF4E-EIF4G, which are templates for translation. Functionally, has RNA-binding and proteolytic activities. In terms of biological role, an RNA-dependent RNA polymerase that plays an essential role in the virus replication. Its function is as follows. Involved in aphid transmission, cell-to-cell and systemis movement, encapsidation of the viral RNA and in the regulation of viral RNA amplification. The polypeptide is Genome polyprotein (Prunus armeniaca (Apricot)).